We begin with the raw amino-acid sequence, 438 residues long: DNA primase small subunit (438 aa).

Active-site residues include Glu63, Asp127, and Asp129. The Zinc knuckle motif signature appears at 139-149 (CCSGAGVCLKC).

Belongs to the eukaryotic-type primase small subunit family. As to quaternary structure, heterodimer of a catalytic subunit Prim1 and a regulatory subunit Prim2, also known as the DNA primase complex. Component of the alpha DNA polymerase complex (also known as the alpha DNA polymerase-primase complex) consisting of four subunits: the catalytic subunit PolA1, the regulatory subunit PolA2, and the primase complex subunits Prim1 and Prim2 respectively. PolA1 associates with the DNA primase complex before association with PolA2. Mg(2+) serves as cofactor. The cofactor is Mn(2+). Expressed in embryos (at protein level).

The presence of the regulatory subunit Prim2 accelerates the kinetics of initiation and primer extension. Functionally, catalytic subunit of the DNA primase complex and component of the DNA polymerase alpha complex (also known as the alpha DNA polymerase-primase complex) which play an essential role in the initiation of DNA synthesis. During the S phase of the cell cycle, the DNA polymerase alpha complex (composed of a catalytic subunit PolA1, an accessory subunit PolA2 and two primase subunits, the catalytic subunit Prim1 and the regulatory subunit Prim2) is recruited to DNA at the replicative forks. The primase subunit of the polymerase alpha complex initiates DNA synthesis by oligomerising short RNA primers on both leading and lagging strands. These primers are initially extended by the polymerase alpha catalytic subunit and subsequently transferred to polymerase delta and polymerase epsilon for processive synthesis on the lagging and leading strand, respectively. In the primase complex, both subunits are necessary for the initial di-nucleotide formation, but the extension of the primer depends only on the catalytic subunit. Can add both ribo- and deoxynucleotides during elongation of the primers. Binds single stranded DNA. In Drosophila melanogaster (Fruit fly), this protein is DNA primase small subunit.